Here is a 1182-residue protein sequence, read N- to C-terminus: Intraflagellar transport protein 122 homolog (1182 aa).

8 WD repeats span residues 10–50, 51–91, 93–129, 131–169, 174–217, 219–258, 260–300, and 453–492; these read KAEQ…QPLK, GHKD…LKYT, NDSI…VSKH, SSSK…KVKI, GSLS…IGKD, PLNF…LGTV, EQNS…HGLY, and KQAT…LLFQ.

In terms of assembly, component of the IFT complex A (IFT-A) complex. IFT-A complex is divided into a core subcomplex composed of IFT122:IFT140:WDR19 which is associated with TULP3 and a peripheral subcomplex composed of IFT43:WDR35:TTC21B. Interacts with IFT43:WDR35; the interaction connects the 2 IFT-A subcomplexes. Interacts with IFTAP; the interaction associates IFTAP with IFT-A complex.

Its subcellular location is the cell projection. The protein localises to the cilium. The protein resides in the cytoplasm. It is found in the cytoskeleton. It localises to the cilium basal body. Its function is as follows. As a component of the IFT complex A (IFT-A), a complex required for retrograde ciliary transport and entry into cilia of G protein-coupled receptors (GPCRs), it is required in ciliogenesis and ciliary protein trafficking. Involved in cilia formation during neuronal patterning. Acts as a negative regulator of Shh signaling. Required to recruit TULP3 to primary cilia. The protein is Intraflagellar transport protein 122 homolog of Mus musculus (Mouse).